We begin with the raw amino-acid sequence, 371 residues long: Probable cysteine protease RDL5 (371 aa).

The signal sequence occupies residues 1–23 (MGYAKSAMLIFLLALVIASCATA). A propeptide spans 24 to 143 (MDMSVVSSND…NRYKTSDGDV (120 aa)) (activation peptide). A glycan (N-linked (GlcNAc...) asparagine) is linked at Asn-94. Cystine bridges form between Cys-165/Cys-206, Cys-199/Cys-239, and Cys-298/Cys-349. Cys-168 is a catalytic residue. Catalysis depends on residues His-304 and Asn-324.

This sequence belongs to the peptidase C1 family. Expressed in roots, inflorescences and siliques.

Possesses protease activity in vitro. The chain is Probable cysteine protease RDL5 from Arabidopsis thaliana (Mouse-ear cress).